The primary structure comprises 295 residues: Transmembrane protein 71 (295 aa).

Helical transmembrane passes span L229–C249 and F253–V273.

This sequence belongs to the TMEM71 family.

The protein localises to the membrane. This Homo sapiens (Human) protein is Transmembrane protein 71 (TMEM71).